A 448-amino-acid polypeptide reads, in one-letter code: MTGRVYVKTHGCQMNEYDSDKMADVLVKERGYTRVDSPGDADVILLNTCSVREKAQEKVFSELGRWKDYKTRNGAVIGVGGCVASQEGEAIVQRAPHVDVVFGPQTLHRLPEMIDRARDGGRSVVDVSFPEIEKFDRLPEPRAEGPTAFVSIMEGCSKYCSFCVVPYTRGEEISRPFEDVIAEVASLAEQGVREVTLLGQNVNAYRGPMADGTVCDLALLIHYVAALDGIGRIRFTTSHPVEFSDSLIEAYREEPKLAGHLHLPVQSGSDLVLKLMKRGHTAAEYLDKIERIKAARPGISIASDFIVGYPGESEADFEDTLRLIEAVGFDQSFSFLYSPRPGTPAASLSDSTPAEVKRERLYRLQETINANARRISESMVGTVQRVLVDGRSRKDPNEISGRTENNRVVNFAGHPRLIGHFVEVRITEAKPNSLRGELLGLDDDMAAA.

In terms of domain architecture, MTTase N-terminal spans 3-119 (GRVYVKTHGC…LPEMIDRARD (117 aa)). The [4Fe-4S] cluster site is built by Cys-12, Cys-49, Cys-82, Cys-156, Cys-160, and Cys-163. The Radical SAM core domain occupies 142–374 (RAEGPTAFVS…QETINANARR (233 aa)). Positions 377 to 440 (ESMVGTVQRV…PNSLRGELLG (64 aa)) constitute a TRAM domain.

It belongs to the methylthiotransferase family. MiaB subfamily. In terms of assembly, monomer. Requires [4Fe-4S] cluster as cofactor.

The protein localises to the cytoplasm. The catalysed reaction is N(6)-dimethylallyladenosine(37) in tRNA + (sulfur carrier)-SH + AH2 + 2 S-adenosyl-L-methionine = 2-methylsulfanyl-N(6)-dimethylallyladenosine(37) in tRNA + (sulfur carrier)-H + 5'-deoxyadenosine + L-methionine + A + S-adenosyl-L-homocysteine + 2 H(+). Catalyzes the methylthiolation of N6-(dimethylallyl)adenosine (i(6)A), leading to the formation of 2-methylthio-N6-(dimethylallyl)adenosine (ms(2)i(6)A) at position 37 in tRNAs that read codons beginning with uridine. The chain is tRNA-2-methylthio-N(6)-dimethylallyladenosine synthase from Alkalilimnicola ehrlichii (strain ATCC BAA-1101 / DSM 17681 / MLHE-1).